The sequence spans 147 residues: Probable disulfide formation protein (147 aa).

Residues 9-28 traverse the membrane as a helical segment; that stretch reads NYSLYFAWLTALIATLGSLY. A disulfide bond links Cys-38 and Cys-41. Transmembrane regions (helical) follow at residues 43-62 and 69-86; these read YQRV…AYRT and YALP…YQYL. A disulfide bond links Cys-99 and Cys-106. Residues 115–138 form a helical membrane-spanning segment; it reads GFITLPFLGMLATLIMSFFLIMAF.

This sequence belongs to the DsbB family. BdbC subfamily.

It is found in the cell inner membrane. Functionally, required for disulfide bond formation in some proteins. This Coxiella burnetii (strain CbuK_Q154) (Coxiella burnetii (strain Q154)) protein is Probable disulfide formation protein.